Consider the following 278-residue polypeptide: NAD kinase (278 aa).

D56 (proton acceptor) is an active-site residue. Residues 56–57, 132–133, R158, D160, and 171–176 each bind NAD(+); these read DG, NE, and TAYNKS.

This sequence belongs to the NAD kinase family. It depends on a divalent metal cation as a cofactor.

The protein resides in the cytoplasm. It carries out the reaction NAD(+) + ATP = ADP + NADP(+) + H(+). In terms of biological role, involved in the regulation of the intracellular balance of NAD and NADP, and is a key enzyme in the biosynthesis of NADP. Catalyzes specifically the phosphorylation on 2'-hydroxyl of the adenosine moiety of NAD to yield NADP. This is NAD kinase from Streptococcus agalactiae serotype III (strain NEM316).